Reading from the N-terminus, the 1036-residue chain is Isoleucine--tRNA ligase (1036 aa).

The 'HIGH' region signature appears at 46–56 (PFATGLPHYGH). The short motif at 589–593 (KMSKR) is the 'KMSKS' region element. ATP is bound at residue K592.

Belongs to the class-I aminoacyl-tRNA synthetase family. IleS type 2 subfamily. As to quaternary structure, monomer. The cofactor is Zn(2+).

The protein localises to the cytoplasm. It catalyses the reaction tRNA(Ile) + L-isoleucine + ATP = L-isoleucyl-tRNA(Ile) + AMP + diphosphate. Catalyzes the attachment of isoleucine to tRNA(Ile). As IleRS can inadvertently accommodate and process structurally similar amino acids such as valine, to avoid such errors it has two additional distinct tRNA(Ile)-dependent editing activities. One activity is designated as 'pretransfer' editing and involves the hydrolysis of activated Val-AMP. The other activity is designated 'posttransfer' editing and involves deacylation of mischarged Val-tRNA(Ile). The chain is Isoleucine--tRNA ligase from Chlamydia trachomatis serovar L2 (strain ATCC VR-902B / DSM 19102 / 434/Bu).